We begin with the raw amino-acid sequence, 190 residues long: Segregation and condensation protein B (190 aa).

The protein belongs to the ScpB family. Homodimer. Homodimerization may be required to stabilize the binding of ScpA to the Smc head domains. Component of a cohesin-like complex composed of ScpA, ScpB and the Smc homodimer, in which ScpA and ScpB bind to the head domain of Smc. The presence of the three proteins is required for the association of the complex with DNA.

The protein localises to the cytoplasm. Its function is as follows. Participates in chromosomal partition during cell division. May act via the formation of a condensin-like complex containing Smc and ScpA that pull DNA away from mid-cell into both cell halves. The chain is Segregation and condensation protein B from Bacillus cereus (strain ATCC 14579 / DSM 31 / CCUG 7414 / JCM 2152 / NBRC 15305 / NCIMB 9373 / NCTC 2599 / NRRL B-3711).